We begin with the raw amino-acid sequence, 1350 residues long: Nicotinate hydroxylase hnxS (1350 aa).

Cys-49, Cys-54, Cys-89, Cys-92, Cys-133, and Cys-135 together coordinate [2Fe-2S] cluster. Positions 164–193 are disordered; sequence LVGTEEETESDMGAHSGSGDTGSRSSGSCG. Over residues 180-192 the composition is skewed to low complexity; it reads GSGDTGSRSSGSC. The region spanning 256–445 is the FAD-binding PCMH-type domain; sequence YGDAEQAWVK…TKIAVPMPSK (190 aa). FAD contacts are provided by residues 284-291, 379-383, Asp-392, and Lys-455; these read LVTGASEV and CLAGN. The Mo-molybdopterin site is built by Gln-793 and Phe-824. Positions 828 and 906 each coordinate substrate. Mo-molybdopterin is bound by residues Arg-938 and Ala-1107. Glu-1281 serves as the catalytic Proton acceptor.

The protein belongs to the xanthine dehydrogenase family. The cofactor is [2Fe-2S] cluster. FAD serves as cofactor. Requires Mo-molybdopterin as cofactor.

Allopurinol inhibits catalytic activity in a linear fashion. In terms of biological role, nicotinate hydroxylase, part of the hnx cluster involved in the purine degradation. The nicotinate hydroxylase hnxS accepts nicotinate as a substrate and catalyzes the first step of nicotinate catabolism. HnxS also accepts hypoxanthine, but not xanthine, as a substrate. The major facilitator-type transporters hxnP and hxnZ are probably involved in the uptake of nicotinate-derived metabolites, and the oxidoreductases hxnT and hxnY in the further metabolism of 6-OH nicotinic acid. The chain is Nicotinate hydroxylase hnxS from Emericella nidulans (strain FGSC A4 / ATCC 38163 / CBS 112.46 / NRRL 194 / M139) (Aspergillus nidulans).